The primary structure comprises 33 residues: Brevinin-2PTb (33 aa).

Residues Cys27 and Cys33 are joined by a disulfide bond.

In terms of tissue distribution, expressed by the skin glands.

The protein resides in the secreted. In terms of biological role, has antibacterial activity against the Gram-positive bacterium S.aureus ATCC 25923 (MIC=9 uM) and the Gram-negative bacterium E.coli ATCC 25726 (MIC=9 uM). The polypeptide is Brevinin-2PTb (Pulchrana picturata (Malaysian fire frog)).